Reading from the N-terminus, the 158-residue chain is NADPH-dependent 7-cyano-7-deazaguanine reductase (158 aa).

Cysteine 56 serves as the catalytic Thioimide intermediate. Residue aspartate 63 is the Proton donor of the active site. Residues 78 to 80 and 97 to 98 each bind substrate; these read LES and HE.

The protein belongs to the GTP cyclohydrolase I family. QueF type 1 subfamily.

It is found in the cytoplasm. The catalysed reaction is 7-aminomethyl-7-carbaguanine + 2 NADP(+) = 7-cyano-7-deazaguanine + 2 NADPH + 3 H(+). It functions in the pathway tRNA modification; tRNA-queuosine biosynthesis. In terms of biological role, catalyzes the NADPH-dependent reduction of 7-cyano-7-deazaguanine (preQ0) to 7-aminomethyl-7-deazaguanine (preQ1). In Nitrobacter hamburgensis (strain DSM 10229 / NCIMB 13809 / X14), this protein is NADPH-dependent 7-cyano-7-deazaguanine reductase.